The sequence spans 297 residues: Quinate/shikimate dehydrogenase (297 aa).

Substrate is bound by residues lysine 80 and aspartate 116. NAD(+) contacts are provided by residues 141 to 144, 164 to 167, lysine 214, 241 to 244, and glycine 264; these read AGGA, NRRD, and CVYN.

The protein belongs to the shikimate dehydrogenase family. Homodimer.

It carries out the reaction L-quinate + NAD(+) = 3-dehydroquinate + NADH + H(+). The enzyme catalyses L-quinate + NADP(+) = 3-dehydroquinate + NADPH + H(+). The catalysed reaction is shikimate + NADP(+) = 3-dehydroshikimate + NADPH + H(+). It catalyses the reaction shikimate + NAD(+) = 3-dehydroshikimate + NADH + H(+). The protein operates within metabolic intermediate biosynthesis; chorismate biosynthesis; chorismate from D-erythrose 4-phosphate and phosphoenolpyruvate: step 4/7. Its function is as follows. The actual biological function of YdiB remains unclear, nor is it known whether 3-dehydroshikimate or quinate represents the natural substrate. Catalyzes the reversible NAD-dependent reduction of both 3-dehydroshikimate (DHSA) and 3-dehydroquinate to yield shikimate (SA) and quinate, respectively. It can use both NAD or NADP for catalysis, however it has higher catalytic efficiency with NAD. The polypeptide is Quinate/shikimate dehydrogenase (Shigella dysenteriae serotype 1 (strain Sd197)).